The sequence spans 390 residues: Purine permease 21 (390 aa).

A disordered region spans residues 12-34 (QQGKEPIPTDQDERSSVSGSQTK). The next 10 membrane-spanning stretches (helical) occupy residues 44-64 (WLRV…ATIL), 78-98 (LATV…LLSV), 118-138 (LVYI…SIGL), 140-160 (YLPV…TAFF), 169-189 (LTPI…LLAF), 204-224 (YVKG…LLSL), 241-261 (VINM…VGLF), 287-307 (LVWT…LIFE), 312-332 (FSNA…VIIF), and 336-356 (MNGL…SYVY). A disordered region spans residues 367-390 (KSNEIPTTESPDRPEAEGSSEQSK).

The protein belongs to the purine permeases (TC 2.A.7.14) family. In terms of tissue distribution, expressed in mesophyll cells.

The protein localises to the membrane. This is Purine permease 21 from Arabidopsis thaliana (Mouse-ear cress).